Reading from the N-terminus, the 643-residue chain is Beta-1,3-galactosyltransferase GALT1 (643 aa).

The Cytoplasmic portion of the chain corresponds to 1–6 (MKRFYG). Residues 7–23 (GLLVVSMCMFLTVYRYV) form a helical; Signal-anchor for type II membrane protein membrane-spanning segment. At 24 to 643 (DLNTPVEKPY…TKRSLCCREW (620 aa)) the chain is on the lumenal side. N-linked (GlcNAc...) asparagine glycans are attached at residues Asn-45, Asn-87, Asn-144, Asn-162, Asn-277, Asn-287, and Asn-508. One can recognise a Galectin domain in the interval 171 to 364 (LKLQIPCGLT…DFRLISILAS (194 aa)).

Belongs to the glycosyltransferase 31 family. As to quaternary structure, interacts with GMII. Mn(2+) serves as cofactor. In terms of tissue distribution, expressed in stems and siliques.

The protein localises to the golgi apparatus membrane. The protein operates within protein modification; protein glycosylation. In terms of biological role, beta-1,3-galactosyltransferase that transfers galactose from UDP-galactose to substrates with a terminal beta-N-acetylglucosamine (beta-GlcNAc) residue. Involved in the biosynthesis of N-glycans containing Lewis a structures (with the combination of FUT13). The polypeptide is Beta-1,3-galactosyltransferase GALT1 (Arabidopsis thaliana (Mouse-ear cress)).